The primary structure comprises 466 residues: Asparagine--tRNA ligase (466 aa).

The protein belongs to the class-II aminoacyl-tRNA synthetase family. As to quaternary structure, homodimer.

It localises to the cytoplasm. It carries out the reaction tRNA(Asn) + L-asparagine + ATP = L-asparaginyl-tRNA(Asn) + AMP + diphosphate + H(+). This Idiomarina loihiensis (strain ATCC BAA-735 / DSM 15497 / L2-TR) protein is Asparagine--tRNA ligase.